A 443-amino-acid polypeptide reads, in one-letter code: Anthocyanidin 3-O-glucoside 5-O-glucosyltransferase 2 (443 aa).

Residues Met-1–Gln-22 form the signal peptide. His-16 (proton acceptor) is an active-site residue. An anthocyanidin is bound at residue His-16. 8 residues coordinate UDP-alpha-D-glucose: Gln-340, His-355, Trp-358, Asn-359, Ser-360, Glu-363, Asp-379, and Gln-380.

It belongs to the UDP-glycosyltransferase family.

It catalyses the reaction an anthocyanidin 3-O-beta-D-glucoside + UDP-alpha-D-glucose = an anthocyanidin 3,5-di-O-beta-D-glucoside + UDP + 2 H(+). Its pathway is pigment biosynthesis; anthocyanin biosynthesis. Catalyzes the glucosylation at the O-5 position of anthocyanidin 3-glucosides to form anthocyanidin 3,5-di-O-glucosides using UDP-glucose as sugar donor. Anthocyanidin 3,5-di-O-glucosides are molecules that are responsible for pigmentation. Also acts on anthocyanidin 3-O-(6-O-malonylglucoside). Much less active with hydroxycinnamoylglucose derivatives. No activity in the absence of the 3-O-glucoside group. The protein is Anthocyanidin 3-O-glucoside 5-O-glucosyltransferase 2 (PF3R6) of Perilla frutescens (Beefsteak mint).